Here is a 349-residue protein sequence, read N- to C-terminus: Anthranilate phosphoribosyltransferase (349 aa).

5-phospho-alpha-D-ribose 1-diphosphate contacts are provided by residues Gly-84, 87-88 (GD), Thr-92, 94-97 (NIST), 112-120 (KHGNRAASS), and Ser-124. Gly-84 contributes to the anthranilate binding site. Ser-96 is a binding site for Mg(2+). Residue Asn-115 participates in anthranilate binding. Arg-170 provides a ligand contact to anthranilate. Residues Asp-228 and Glu-229 each coordinate Mg(2+).

It belongs to the anthranilate phosphoribosyltransferase family. Homodimer. Requires Mg(2+) as cofactor.

It carries out the reaction N-(5-phospho-beta-D-ribosyl)anthranilate + diphosphate = 5-phospho-alpha-D-ribose 1-diphosphate + anthranilate. Its pathway is amino-acid biosynthesis; L-tryptophan biosynthesis; L-tryptophan from chorismate: step 2/5. In terms of biological role, catalyzes the transfer of the phosphoribosyl group of 5-phosphorylribose-1-pyrophosphate (PRPP) to anthranilate to yield N-(5'-phosphoribosyl)-anthranilate (PRA). In Leifsonia xyli subsp. xyli (strain CTCB07), this protein is Anthranilate phosphoribosyltransferase.